Consider the following 114-residue polypeptide: Cytochrome c oxidase assembly protein cox16, mitochondrial (114 aa).

A helical membrane pass occupies residues 29 to 49 (PFLLFGLPFMSVIVAGSFILT).

The protein belongs to the COX16 family.

Its subcellular location is the mitochondrion inner membrane. Its function is as follows. Required for the assembly of the mitochondrial respiratory chain complex IV (CIV), also known as cytochrome c oxidase. May participate in merging the COX1 and COX2 assembly lines. This is Cytochrome c oxidase assembly protein cox16, mitochondrial (cox-9) from Neurospora crassa (strain ATCC 24698 / 74-OR23-1A / CBS 708.71 / DSM 1257 / FGSC 987).